The sequence spans 311 residues: Catechol 1,2-dioxygenase 1 (311 aa).

4 residues coordinate Fe cation: tyrosine 164, tyrosine 200, histidine 224, and histidine 226.

The protein belongs to the intradiol ring-cleavage dioxygenase family. Homodimer. Fe(3+) serves as cofactor.

The catalysed reaction is catechol + O2 = cis,cis-muconate + 2 H(+). Its pathway is aromatic compound metabolism; beta-ketoadipate pathway; 5-oxo-4,5-dihydro-2-furylacetate from catechol: step 1/3. Its function is as follows. Can cleave 4-methyl-, 4-chloro-, and 3-methoxycatechol at lower rates than catechol, but has no activity with 4-nitrocatechol or protocatechuic acid. The protein is Catechol 1,2-dioxygenase 1 (catA1) of Acinetobacter lwoffii.